A 442-amino-acid polypeptide reads, in one-letter code: U11/U12 small nuclear ribonucleoprotein 65 kDa protein (442 aa).

The region spanning 28-102 is the RRM 1 domain; it reads VTLLVRHLPD…KVLQVQRANK (75 aa). Disordered regions lie at residues 101–138, 200–242, and 290–317; these read NKPNDNKKSRQIEESVTKGNAFSTVSTNNDSKSGQILS, LALP…GRKR, and SKVTQDEYKEESENEDPADEPKEKDSNL. Positions 102-116 are enriched in basic and acidic residues; sequence KPNDNKKSRQIEESV. The segment covering 117 to 136 has biased composition (polar residues); the sequence is TKGNAFSTVSTNNDSKSGQI. The segment covering 200–209 has biased composition (pro residues); sequence LALPTPPLPK. The segment covering 297 to 307 has biased composition (acidic residues); the sequence is YKEESENEDPA. One can recognise an RRM 2 domain in the interval 352-434; it reads VVLYIKNLAK…KPMIIQFGRT (83 aa).

As to quaternary structure, component of the U11/U12 snRNPs that are part of the U12-type spliceosome. Forms a complex with U12 snRNA. As to expression, ubiquitous.

It localises to the nucleus. Its function is as follows. Component of minor spliceosome required for U12-type intron splicing and alternative splicing of many introns. Binds specifically to U12 snRNA, which is necessary for branch-point site recognition. Required for normal plant development. The sequence is that of U11/U12 small nuclear ribonucleoprotein 65 kDa protein (SNRNP65) from Arabidopsis thaliana (Mouse-ear cress).